Here is an 87-residue protein sequence, read N- to C-terminus: Small ribosomal subunit protein bS20 (87 aa).

The interval 1–22 (MANSPQAKKRARQNEKRFAINK) is disordered.

It belongs to the bacterial ribosomal protein bS20 family.

In terms of biological role, binds directly to 16S ribosomal RNA. This is Small ribosomal subunit protein bS20 from Ruegeria sp. (strain TM1040) (Silicibacter sp.).